A 501-amino-acid chain; its full sequence is Probable histidine--tRNA ligase, mitochondrial (501 aa).

The segment at 32–54 is disordered; the sequence is TNSNNNNNNNNNNNNNNNNNKNI. Low complexity predominate over residues 33-54; it reads NSNNNNNNNNNNNNNNNNNKNI.

It belongs to the class-II aminoacyl-tRNA synthetase family.

Its subcellular location is the mitochondrion matrix. It catalyses the reaction tRNA(His) + L-histidine + ATP = L-histidyl-tRNA(His) + AMP + diphosphate + H(+). In Dictyostelium discoideum (Social amoeba), this protein is Probable histidine--tRNA ligase, mitochondrial (mhisS).